The primary structure comprises 247 residues: Ribonuclease PH (247 aa).

Residues Arg-87 and Gly-125–Arg-127 contribute to the phosphate site.

Belongs to the RNase PH family. As to quaternary structure, homohexameric ring arranged as a trimer of dimers.

It carries out the reaction tRNA(n+1) + phosphate = tRNA(n) + a ribonucleoside 5'-diphosphate. Phosphorolytic 3'-5' exoribonuclease that plays an important role in tRNA 3'-end maturation. Removes nucleotide residues following the 3'-CCA terminus of tRNAs; can also add nucleotides to the ends of RNA molecules by using nucleoside diphosphates as substrates, but this may not be physiologically important. Probably plays a role in initiation of 16S rRNA degradation (leading to ribosome degradation) during starvation. This is Ribonuclease PH from Nostoc sp. (strain PCC 7120 / SAG 25.82 / UTEX 2576).